The primary structure comprises 483 residues: Glutarate-semialdehyde dehydrogenase (483 aa).

Residues 156-157 (WN), 180-183 (KPAS), and 233-234 (GS) contribute to the NADP(+) site. Catalysis depends on Glu255, which acts as the Proton acceptor. Residue Leu256 coordinates NADP(+). Cys289 (nucleophile) is an active-site residue. Position 386 (Glu386) interacts with NADP(+).

This sequence belongs to the aldehyde dehydrogenase family.

The enzyme catalyses 5-oxopentanoate + NADP(+) + H2O = glutarate + NADPH + 2 H(+). It participates in amino-acid degradation. Catalyzes the conversion of 5-oxopentanoate (glutarate semialdehyde) to glutarate. Involved in L-lysine degradation. This chain is Glutarate-semialdehyde dehydrogenase, found in Pseudomonas aeruginosa (strain ATCC 15692 / DSM 22644 / CIP 104116 / JCM 14847 / LMG 12228 / 1C / PRS 101 / PAO1).